The sequence spans 405 residues: Corticosteroid-binding globulin (405 aa).

A signal peptide spans 1 to 22 (MPLLLYTCLLWLPTSGLWTVQA). Asn31, Asn96, and Asn176 each carry an N-linked (GlcNAc...) asparagine glycan. A cortisol-binding site is contributed by Gln254. Asn260 carries N-linked (GlcNAc...) asparagine glycosylation. A cortisol-binding site is contributed by Asn286. Residues Asn330 and Asn369 are each glycosylated (N-linked (GlcNAc...) asparagine). Positions 390 and 393 each coordinate cortisol.

The protein belongs to the serpin family. N-glycosylated; binds 5 oligosaccharide chains. In terms of processing, glycosylation in position Asn-260 is needed for steroid binding. As to expression, plasma; synthesized in liver. Has also been identified in a number of glycocorticoid responsive cells.

It is found in the secreted. In terms of biological role, major transport protein for glucocorticoids and progestins in the blood of almost all vertebrate species. The sequence is that of Corticosteroid-binding globulin (SERPINA6) from Homo sapiens (Human).